Reading from the N-terminus, the 38-residue chain is Putative defensin-like protein 105 (38 aa).

Cystine bridges form between Cys5-Cys27, Cys13-Cys33, and Cys17-Cys34.

This sequence belongs to the DEFL family.

This chain is Putative defensin-like protein 105, found in Arabidopsis thaliana (Mouse-ear cress).